Reading from the N-terminus, the 289-residue chain is Type III pantothenate kinase (289 aa).

9–16 (DAGNSRVK) is a binding site for ATP. Substrate is bound by residues Tyr106 and 113-116 (GSDR). Asp115 (proton acceptor) is an active-site residue. ATP is bound at residue Thr139. Residue Thr209 coordinates substrate.

This sequence belongs to the type III pantothenate kinase family. Homodimer. Requires NH4(+) as cofactor. The cofactor is K(+).

It localises to the cytoplasm. It catalyses the reaction (R)-pantothenate + ATP = (R)-4'-phosphopantothenate + ADP + H(+). Its pathway is cofactor biosynthesis; coenzyme A biosynthesis; CoA from (R)-pantothenate: step 1/5. Functionally, catalyzes the phosphorylation of pantothenate (Pan), the first step in CoA biosynthesis. The sequence is that of Type III pantothenate kinase from Paraburkholderia phymatum (strain DSM 17167 / CIP 108236 / LMG 21445 / STM815) (Burkholderia phymatum).